Consider the following 293-residue polypeptide: MRVLVGGGTGFIGTAVTQLLRGRGHEVKLVSRQPGPGRITWSELSESGLPLCDVVINLAGENILNPLRRWNETFQKEVLTSRLDTTHLLAKAITETAHPPQAWILVTGVAYYQPSLTKEYDEDSPGGNFDFFSNLVTKWEAAARLPGESTRQVVVRSGVVLGRGGGAISHMLLPFRLGLGGPIGSGRQFFPWIHIGDLAGILNYALEANHVQGVLNGVAPASTTTNAEFAQALGAALGRPAFIPVPSTVVRAVFGERAIMLLEGQKVVPRRTLATGYQYSFPELRAALKDVVA.

NADP(+) contacts are provided by residues 31–32, 58–59, glutamate 77, arginine 82, and valine 160; these read SR and LA.

It belongs to the NAD(P)-dependent epimerase/dehydratase family. SDR39U1 subfamily.

Putative NADP-dependent oxidoreductase. This chain is Epimerase family protein SDR39U1 (Sdr39u1), found in Mus musculus (Mouse).